Consider the following 795-residue polypeptide: MSARTPLPTVNERDTENHTSVDGYTETHIPPAKSSSRQNLPRCRNSITSATDEQPHIGNYRLQKTIGKGNFAKVKLARHVLTGREVAVKIIDKTQLNPTSLQKLFREVRIMKILNHPNIVKLFEVIETEKTLYLVMEYASGGEVFDYLVAHGRMKEKEARAKFRQIVSAVQYCHQKCIVHRDLKAENLLLDADMNIKIADFGFSNEFTVGNKLDTFCGSPPYAAPELFQGKKYDGPEVDVWSLGVILYTLVSGSLPFDGQNLKELRERVLRGKYRIPFYMSTDCENLLKKLLVLNPIKRGSLEQIMKDRWMNVGHEEEELKPYSEPELDLSDAKRIDIMVTMGFARDEINDALVSQKYDEVMATYILLGRKPPEFEGGESLSSGSLCQRSRPSSDLNNSTLQSPAHLKVQRSISANQKQRRFSDHAGPSIPPAVSYTKRPQANSVESEQKEEWGKDTARRLGSTTVGSKSEVTASPLVGPDRKKSTASPSNNVYSGGSMARRNTYVCERSTDRYAALQNGRDSSLTEMSASSMSSAGSTVASAGPSARPRHQKSMSTSGHPIKVTLPTIKDGSEAYRPGAAQRVPAASPSAHSISASTPDRTRFPRGSSSRSTFHGEQLRERRSAAYNGPPASPSHETGAFAHARRGTSTGIISKITSKFVRRDPSEGEASGRADTARGSSGDPKERDKDEGKEAKPRSLRFTWSMKTTSSMDPNDMLREIRKVLDANTCDYEQKERFLLFCVHGDARQDSLVQWEMEVCKLPRLSLNGVRFKRISGTSIAFKNIASKIANELKL.

The disordered stretch occupies residues 1–41; that stretch reads MSARTPLPTVNERDTENHTSVDGYTETHIPPAKSSSRQNLP. Phosphothreonine is present on Thr5. Residues 60 to 311 form the Protein kinase domain; sequence YRLQKTIGKG…LEQIMKDRWM (252 aa). ATP-binding positions include 66-74 and Lys89; that span reads IGKGNFAKV. Asp182 functions as the Proton acceptor in the catalytic mechanism. Position 208 is a phosphothreonine (Thr208). Residue Thr215 is modified to Phosphothreonine; by LKB1 and TAOK1. Residue Ser219 is modified to Phosphoserine; by GSK3-beta. Residues 329–370 form the UBA domain; it reads DLSDAKRIDIMVTMGFARDEINDALVSQKYDEVMATYILLGR. Disordered stretches follow at residues 377–498 and 518–699; these read GGES…SGGS and QNGR…KPRS. Phosphoserine is present on residues Ser382, Ser390, Ser393, Ser403, Ser423, and Ser444. The segment covering 387–403 has biased composition (polar residues); it reads CQRSRPSSDLNNSTLQS. The span at 447–459 shows a compositional bias: basic and acidic residues; sequence SEQKEEWGKDTAR. The span at 462–473 shows a compositional bias: polar residues; it reads GSTTVGSKSEVT. At Ser475 the chain carries Phosphoserine. Polar residues predominate over residues 486–495; it reads TASPSNNVYS. Low complexity-rich tracts occupy residues 523 to 547 and 585 to 599; these read SSLT…GPSA and PAAS…ASTP. A Phosphoserine modification is found at Ser588. The residue at position 613 (Thr613) is a Phosphothreonine; by PKC/PRKCZ. Over residues 647-657 the composition is skewed to polar residues; sequence GTSTGIISKIT. Composition is skewed to basic and acidic residues over residues 661 to 676 and 683 to 697; these read VRRD…RADT and DPKE…EAKP. Ser666 is modified (phosphoserine). A KA1 domain is found at 746 to 795; sequence DARQDSLVQWEMEVCKLPRLSLNGVRFKRISGTSIAFKNIASKIANELKL.

This sequence belongs to the protein kinase superfamily. CAMK Ser/Thr protein kinase family. SNF1 subfamily. Interacts with MAPT/TAU. Requires Mg(2+) as cofactor. Post-translationally, phosphorylated at Thr-215 by STK11/LKB1 in complex with STE20-related adapter-alpha (STRADA) pseudo kinase and CAB39. Phosphorylation at Thr-215 by TAOK1 activates the kinase activity, leading to phosphorylation and detachment of MAPT/TAU from microtubules. Phosphorylation at Ser-219 by GSK3-beta (GSK3B) inhibits the kinase activity. Phosphorylation at Thr-613 by PRKCZ/aPKC in polarized epithelial cells inhibits the kinase activity.

It is found in the cell membrane. The protein resides in the cytoplasm. Its subcellular location is the cytoskeleton. It localises to the cell projection. The protein localises to the dendrite. It carries out the reaction L-seryl-[protein] + ATP = O-phospho-L-seryl-[protein] + ADP + H(+). The enzyme catalyses L-threonyl-[protein] + ATP = O-phospho-L-threonyl-[protein] + ADP + H(+). The catalysed reaction is L-seryl-[tau protein] + ATP = O-phospho-L-seryl-[tau protein] + ADP + H(+). It catalyses the reaction L-threonyl-[tau protein] + ATP = O-phospho-L-threonyl-[tau protein] + ADP + H(+). With respect to regulation, inhibited by phosphorylation at Ser-219. Activated by phosphorylation on Thr-215. Functionally, serine/threonine-protein kinase. Involved in cell polarity and microtubule dynamics regulation. Phosphorylates DCX, MAP2 and MAP4. Phosphorylates the microtubule-associated protein MAPT/TAU. Involved in cell polarity by phosphorylating the microtubule-associated proteins MAP2, MAP4 and MAPT/TAU at KXGS motifs, causing detachment from microtubules, and their disassembly. Involved in the regulation of neuronal migration through its dual activities in regulating cellular polarity and microtubule dynamics, possibly by phosphorylating and regulating DCX. Also acts as a positive regulator of the Wnt signaling pathway, probably by mediating phosphorylation of dishevelled proteins (DVL1, DVL2 and/or DVL3). The protein is Serine/threonine-protein kinase MARK1 of Mus musculus (Mouse).